Here is a 595-residue protein sequence, read N- to C-terminus: MCTLQLHLLLLVVLMLSETARPQPSSTARAFPTSWGLEPVTPEVPTSAPPDSSESPTPWTLSMPVNATTDPFPALPICVCDLTPGTCDLNCCCDKDCDLLHPRTVFSFCLPGSVRSSSWVCVDNSLMFRSNSPFPSRVFTDSSGTTQFCVRVNNSKANYFQKLQTVNATNFQALAAEFGGQSFPSMPPETQPPVLFYRAGDPILTYYPSWSVVSLLRQPAAVGAGGLCAESNPAGFLESKSTTCPRFFRDLASSCTSEPALDAASYYNFRVLKVPRGVTDLQNMKFQVPVTLASQASPPLLAGNTCQNIVSQVVYEIETNGTFGIQKVSVSFRQTNLTVKPGVSLQQDFIVHFRAFQQRKAAAPAAPRSGNPGYLTGKPLLVLTGDTSHSMTLLQSEGNGLCSAKRHAVQFGVNAVSGCQLRPREVNCSHLQEEVYQTLHGRPRPEHVAVFGNADPAQRGGWTRILSRDCSVSAVNCTSCCLIPVSLEIQVLWAHLGLQSNPQAHVAGARFLYQCKSVQEHQRGIEVSLTTLVNFVDITQKPEPPRDQPRIDWKLPFDFFFPFKAALSRGASVQKDSLVLILCVLLLGLLNSQTK.

An N-terminal signal peptide occupies residues 1 to 22 (MCTLQLHLLLLVVLMLSETARP). Positions 23 to 62 (QPSSTARAFPTSWGLEPVTPEVPTSAPPDSSESPTPWTLS) are disordered. Topologically, residues 23-575 (QPSSTARAFP…ALSRGASVQK (553 aa)) are extracellular. Polar residues predominate over residues 49-62 (PPDSSESPTPWTLS). N-linked (GlcNAc...) asparagine glycosylation is found at Asn167 and Asn336. A helical transmembrane segment spans residues 576 to 594 (DSLVLILCVLLLGLLNSQT). Residue Lys595 is a topological domain, cytoplasmic.

It belongs to the tectonic family. In terms of assembly, part of the tectonic-like complex (also named B9 complex).

It is found in the membrane. Functionally, part of the tectonic-like complex which is required for tissue-specific ciliogenesis and may regulate ciliary membrane composition. May be involved in apoptosis regulation. Necessary for signal transduction through the sonic hedgehog (Shh) signaling pathway. The sequence is that of Tectonic-3 (Tctn3) from Mus musculus (Mouse).